Consider the following 241-residue polypeptide: Glucosamine-6-phosphate deaminase (241 aa).

Asp67 functions as the Proton acceptor; for enolization step in the catalytic mechanism. The active-site For ring-opening step is the Asn136. The active-site Proton acceptor; for ring-opening step is the His138. Glu143 acts as the For ring-opening step in catalysis.

The protein belongs to the glucosamine/galactosamine-6-phosphate isomerase family. NagB subfamily.

The catalysed reaction is alpha-D-glucosamine 6-phosphate + H2O = beta-D-fructose 6-phosphate + NH4(+). The protein operates within amino-sugar metabolism; N-acetylneuraminate degradation; D-fructose 6-phosphate from N-acetylneuraminate: step 5/5. Catalyzes the reversible isomerization-deamination of glucosamine 6-phosphate (GlcN6P) to form fructose 6-phosphate (Fru6P) and ammonium ion. The protein is Glucosamine-6-phosphate deaminase of Halothermothrix orenii (strain H 168 / OCM 544 / DSM 9562).